The primary structure comprises 336 residues: Ornithine carbamoyltransferase, catabolic (336 aa).

Residues 57-60 (STRT), glutamine 84, arginine 108, and 135-138 (HPTQ) each bind carbamoyl phosphate. L-ornithine-binding positions include asparagine 169, aspartate 233, and 237 to 238 (SM). Carbamoyl phosphate-binding positions include 275 to 276 (CL) and arginine 322.

This sequence belongs to the aspartate/ornithine carbamoyltransferase superfamily. OTCase family.

It is found in the cytoplasm. It catalyses the reaction carbamoyl phosphate + L-ornithine = L-citrulline + phosphate + H(+). The protein operates within amino-acid degradation; L-arginine degradation via ADI pathway; carbamoyl phosphate from L-arginine: step 2/2. Reversibly catalyzes the transfer of the carbamoyl group from carbamoyl phosphate (CP) to the N(epsilon) atom of ornithine (ORN) to produce L-citrulline. The chain is Ornithine carbamoyltransferase, catabolic from Photobacterium profundum (strain SS9).